The sequence spans 486 residues: N-succinylglutamate 5-semialdehyde dehydrogenase (486 aa).

Residue 220-225 coordinates NAD(+); it reads GSSRTG. Residues E243 and C277 contribute to the active site.

It belongs to the aldehyde dehydrogenase family. AstD subfamily.

The enzyme catalyses N-succinyl-L-glutamate 5-semialdehyde + NAD(+) + H2O = N-succinyl-L-glutamate + NADH + 2 H(+). It participates in amino-acid degradation; L-arginine degradation via AST pathway; L-glutamate and succinate from L-arginine: step 4/5. Its function is as follows. Catalyzes the NAD-dependent reduction of succinylglutamate semialdehyde into succinylglutamate. This chain is N-succinylglutamate 5-semialdehyde dehydrogenase, found in Shewanella baltica (strain OS223).